The following is a 322-amino-acid chain: Undecaprenyl-phosphate 4-deoxy-4-formamido-L-arabinose transferase (322 aa).

Topologically, residues 1–235 (MFEIHPVKKV…TCLTTTPLRM (235 aa)) are cytoplasmic. A helical membrane pass occupies residues 236–256 (LSLLGSIIAIGGFSIAVLLVI). At 257 to 269 (LRLTFGPQWAAEG) the chain is on the periplasmic side. The chain crosses the membrane as a helical span at residues 270 to 290 (VFMLFAVLFTFIGAQFIGMGL). The Cytoplasmic segment spans residues 291 to 322 (LGEYIGRIYTDVRARPRYFVQQVIRPSSKENE).

It belongs to the glycosyltransferase 2 family.

The protein localises to the cell inner membrane. The catalysed reaction is UDP-4-deoxy-4-formamido-beta-L-arabinose + di-trans,octa-cis-undecaprenyl phosphate = 4-deoxy-4-formamido-alpha-L-arabinopyranosyl di-trans,octa-cis-undecaprenyl phosphate + UDP. It participates in glycolipid biosynthesis; 4-amino-4-deoxy-alpha-L-arabinose undecaprenyl phosphate biosynthesis; 4-amino-4-deoxy-alpha-L-arabinose undecaprenyl phosphate from UDP-4-deoxy-4-formamido-beta-L-arabinose and undecaprenyl phosphate: step 1/2. Its pathway is bacterial outer membrane biogenesis; lipopolysaccharide biosynthesis. In terms of biological role, catalyzes the transfer of 4-deoxy-4-formamido-L-arabinose from UDP to undecaprenyl phosphate. The modified arabinose is attached to lipid A and is required for resistance to polymyxin and cationic antimicrobial peptides. The chain is Undecaprenyl-phosphate 4-deoxy-4-formamido-L-arabinose transferase from Escherichia coli O139:H28 (strain E24377A / ETEC).